Consider the following 420-residue polypeptide: Melatonin receptor type 1C (420 aa).

The Extracellular segment spans residues 1–34 (MMEVNSTCLDCRTPGTIRTEQDAQDSASQGLTSA). N-linked (GlcNAc...) asparagine glycosylation is present at N5. Residues 35-55 (LAVVLIFTIVVDVLGNILVIL) form a helical membrane-spanning segment. Topologically, residues 56–73 (SVLRNKKLQNAGNLFVVS) are cytoplasmic. Residues 74-94 (LSIADLVVAVYPYPVILIAIF) form a helical membrane-spanning segment. The Extracellular portion of the chain corresponds to 95–106 (QNGWTLGNIHCQ). C105 and C182 are joined by a disulfide. A helical transmembrane segment spans residues 107–127 (ISGFLMGLSVIGSVFNITAIA). At 128 to 152 (INRYCYICHSLRYDKLYNQRSTWCY) the chain is on the cytoplasmic side. The chain crosses the membrane as a helical span at residues 153–173 (LGLTWILTIIAIVPNFFVGSL). Topologically, residues 174–192 (QYDPRIFSCTFAQTVSSSY) are extracellular. A helical transmembrane segment spans residues 193 to 213 (TITVVVVHFIVPLSVVTFCYL). Residues 214–245 (RIWVLVIQVKHRVRQDFKQKLTQTDLRNFLTM) lie on the Cytoplasmic side of the membrane. Residues 246-266 (FVVFVLFAVCWAPLNFIGLAV) form a helical membrane-spanning segment. Topologically, residues 267 to 279 (AINPFHVAPKIPE) are extracellular. The helical transmembrane segment at 280-303 (WLFVLSYFMAYFNSCLNAVIYGVL) threads the bilayer. Over 304 to 420 (NQNFRKEYKR…ELCKDGISQR (117 aa)) the chain is Cytoplasmic.

Belongs to the G-protein coupled receptor 1 family. In terms of tissue distribution, moderately expressed in dermal melanophores.

The protein resides in the cell membrane. Functionally, high affinity receptor for melatonin. Likely to mediate the potent effects of melatonin on pigment aggregation in melanophores. The activity of this receptor is mediated by pertussis toxin sensitive G proteins that inhibit adenylate cyclase activity. The polypeptide is Melatonin receptor type 1C (mtnr1c) (Xenopus laevis (African clawed frog)).